We begin with the raw amino-acid sequence, 308 residues long: Autophagy-related protein 3 (308 aa).

Residues 83–159 (NFVETQTTET…NELADDDDDI (77 aa)) form a flexible region region. The interval 89–121 (TTETRDVGDGWELEGQSEGERESGREDTKSNEE) is disordered. Basic and acidic residues predominate over residues 106-120 (EGERESGREDTKSNE). Catalysis depends on cysteine 235, which acts as the Glycyl thioester intermediate. The segment at 239–283 (NVMKVLMEKVRASRHRARDTEAQKNAEEDWEDLQSDIDDGLRVDQ) is handle region.

Belongs to the ATG3 family. Monomer. Interacts with ATG8 through an intermediate thioester bond between Cys-235 and the C-terminal Gly of ATG8. Interacts with the C-terminal region of the E1-like ATG7 enzyme. Also interacts with the ATG12-ATG5 conjugate.

The protein resides in the cytoplasm. In terms of biological role, E2 conjugating enzyme required for the cytoplasm to vacuole transport (Cvt) and autophagy. Required for selective autophagic degradation of the nucleus (nucleophagy) as well as for mitophagy which contributes to regulate mitochondrial quantity and quality by eliminating the mitochondria to a basal level to fulfill cellular energy requirements and preventing excess ROS production. Responsible for the E2-like covalent binding of phosphatidylethanolamine to the C-terminal Gly of ATG8. The ATG12-ATG5 conjugate plays a role of an E3 and promotes the transfer of ATG8 from ATG3 to phosphatidylethanolamine (PE). This step is required for the membrane association of ATG8. The formation of the ATG8-phosphatidylethanolamine conjugate is essential for autophagy and for the cytoplasm to vacuole transport (Cvt). The ATG8-PE conjugate mediates tethering between adjacent membranes and stimulates membrane hemifusion, leading to expansion of the autophagosomal membrane during autophagy. The protein is Autophagy-related protein 3 of Kluyveromyces marxianus (strain DMKU3-1042 / BCC 29191 / NBRC 104275) (Yeast).